Here is an 847-residue protein sequence, read N- to C-terminus: DNA mismatch repair protein MutS (847 aa).

An ATP-binding site is contributed by 603–610; the sequence is GPNMSGKS.

The protein belongs to the DNA mismatch repair MutS family.

Its function is as follows. This protein is involved in the repair of mismatches in DNA. It is possible that it carries out the mismatch recognition step. This protein has a weak ATPase activity. This chain is DNA mismatch repair protein MutS, found in Streptococcus suis (strain 98HAH33).